Here is a 387-residue protein sequence, read N- to C-terminus: Cytochrome b (387 aa).

Helical transmembrane passes span 32-52 (FGSLLALCLGIQIVTGVTLAM), 76-98 (WLVRYLHSNTASAFFFLVYLHIG), 113-133 (TWAIGTVILIVMMATAFLGYV), and 179-199 (FFALHFLLPFVLAALALMHLI). Residues H82 and H96 each contribute to the heme b site. 2 residues coordinate heme b: H183 and H197. H202 contributes to the a ubiquinone binding site. Transmembrane regions (helical) follow at residues 226–246 (FIFKDLITIFIFFIVLSIFVF), 290–310 (LLGVIAMFAAILALMVMPITD), 322–342 (LSKVVFYIFVANFLILMQIGA), and 349–369 (FIEFGQISTIIYFAYFFVIVP).

The protein belongs to the cytochrome b family. Fungal cytochrome b-c1 complex contains 10 subunits; 3 respiratory subunits, 2 core proteins and 5 low-molecular weight proteins. Cytochrome b-c1 complex is a homodimer. Heme b is required as a cofactor.

The protein resides in the mitochondrion inner membrane. In terms of biological role, component of the ubiquinol-cytochrome c reductase complex (complex III or cytochrome b-c1 complex) that is part of the mitochondrial respiratory chain. The b-c1 complex mediates electron transfer from ubiquinol to cytochrome c. Contributes to the generation of a proton gradient across the mitochondrial membrane that is then used for ATP synthesis. The polypeptide is Cytochrome b (cob) (Emericella nidulans (Aspergillus nidulans)).